Here is a 612-residue protein sequence, read N- to C-terminus: Protein tipD (612 aa).

Residues 95-128 (RNEKKTQQQPPSGSSKMDSSSSSSSSNRVSGMGS) form a disordered region. Low complexity predominate over residues 106–128 (SGSSKMDSSSSSSSSNRVSGMGS). WD repeat units lie at residues 322 to 361 (GHNS…QKST), 364 to 403 (GASQ…SRHT), 406 to 444 (GHIG…CTRT), 447 to 486 (CFSS…PTQV), 490 to 530 (IHEG…TIRT), 535 to 576 (EYRN…TVKV), and 582 to 611 (NNGS…IIQW).

This sequence belongs to the WD repeat tipD family.

Its function is as follows. Not known; disruption of the gene for tipD results in morphological defects. This Dictyostelium discoideum (Social amoeba) protein is Protein tipD (tipD).